A 492-amino-acid chain; its full sequence is PHO85 cyclin-8 (492 aa).

3 disordered regions span residues 1 to 32 (MAND…DNDS), 143 to 163 (SGSG…GTGR), and 223 to 252 (KVNS…ENES). Positions 8–20 (NKSLINDALTRSM) are enriched in polar residues. The span at 23–32 (FYDDDDDNDS) shows a compositional bias: acidic residues. Ser-32 is modified (phosphoserine).

Belongs to the cyclin family. PHO80 subfamily. In terms of assembly, forms a cyclin-CDK complex with PHO85.

It localises to the cytoplasm. The protein resides in the nucleus. Functionally, cyclin partner of the cyclin-dependent kinase (CDK) PHO85. Together with cyclin PCL10, negatively controls glycogen accumulation under favorable growth conditions. Involved in phosphorylation and negative regulation of glycogen synthase GSY2. Also has minor GLC8 kinase activity. The polypeptide is PHO85 cyclin-8 (PCL8) (Saccharomyces cerevisiae (strain ATCC 204508 / S288c) (Baker's yeast)).